A 320-amino-acid polypeptide reads, in one-letter code: Apolipoprotein E (320 aa).

A signal peptide spans 1 to 18 (MKVLWAALLVAFLAGCQG). 8 repeat units span residues 82–103 (ALMD…EQLS), 104–125 (PVAE…ARLG), 126–147 (ADME…AMLG), 148–169 (QSTE…KRLL), 170–191 (RDVD…EGAE), 192–213 (RGVS…ARAA), 214–236 (TVGS…ERLR), and 237–258 (ARME…EQVE). The interval 82–258 (ALMDETMKEL…RLDEVKEQVE (177 aa)) is 8 X 22 AA approximate tandem repeats. A Methionine sulfoxide modification is found at M145. A Phosphoserine modification is found at S149. Residues 160–170 (HLRKLRKRLLR) form an LDL and other lipoprotein receptors binding region. 164–167 (LRKR) contributes to the heparin binding site. A lipid-binding and lipoprotein association region spans residues 212-293 (AATVGSSLAG…SWFEPLVEDM (82 aa)). Heparin is bound at residue 232–239 (GERLRARM). The tract at residues 269–320 (QQMRLQAEAFQARLKSWFEPLVEDMQRQWAGLVEKVQAAVGASAAPVPSDNH) is homooligomerization. Positions 281–293 (RLKSWFEPLVEDM) are specificity for association with VLDL.

The protein belongs to the apolipoprotein A1/A4/E family. Homotetramer. May interact with ABCA1; functionally associated with ABCA1 in the biogenesis of HDLs. May interact with APP/A4 amyloid-beta peptide; the interaction is extremely stable in vitro but its physiological significance is unclear. May interact with MAPT. May interact with MAP2. In the cerebrospinal fluid, interacts with secreted SORL1. Interacts with PMEL; this allows the loading of PMEL luminal fragment on ILVs to induce fibril nucleation. In terms of processing, APOE exists as multiple glycosylated and sialylated glycoforms within cells and in plasma. The extent of glycosylation and sialylation are tissue and context specific. Glycated in plasma VLDL. Post-translationally, phosphorylated by FAM20C in the extracellular medium.

It localises to the secreted. Its subcellular location is the extracellular space. The protein resides in the extracellular matrix. It is found in the extracellular vesicle. The protein localises to the endosome. It localises to the multivesicular body. Its function is as follows. APOE is an apolipoprotein, a protein associating with lipid particles, that mainly functions in lipoprotein-mediated lipid transport between organs via the plasma and interstitial fluids. APOE is a core component of plasma lipoproteins and is involved in their production, conversion and clearance. Apolipoproteins are amphipathic molecules that interact both with lipids of the lipoprotein particle core and the aqueous environment of the plasma. As such, APOE associates with chylomicrons, chylomicron remnants, very low density lipoproteins (VLDL) and intermediate density lipoproteins (IDL) but shows a preferential binding to high-density lipoproteins (HDL). It also binds a wide range of cellular receptors including the LDL receptor/LDLR, the LDL receptor-related proteins LRP1, LRP2 and LRP8 and the very low-density lipoprotein receptor/VLDLR that mediate the cellular uptake of the APOE-containing lipoprotein particles. Finally, APOE also has a heparin-binding activity and binds heparan-sulfate proteoglycans on the surface of cells, a property that supports the capture and the receptor-mediated uptake of APOE-containing lipoproteins by cells. A main function of APOE is to mediate lipoprotein clearance through the uptake of chylomicrons, VLDLs, and HDLs by hepatocytes. APOE is also involved in the biosynthesis by the liver of VLDLs as well as their uptake by peripheral tissues ensuring the delivery of triglycerides and energy storage in muscle, heart and adipose tissues. By participating in the lipoprotein-mediated distribution of lipids among tissues, APOE plays a critical role in plasma and tissues lipid homeostasis. APOE is also involved in two steps of reverse cholesterol transport, the HDLs-mediated transport of cholesterol from peripheral tissues to the liver, and thereby plays an important role in cholesterol homeostasis. First, it is functionally associated with ABCA1 in the biogenesis of HDLs in tissues. Second, it is enriched in circulating HDLs and mediates their uptake by hepatocytes. APOE also plays an important role in lipid transport in the central nervous system, regulating neuron survival and sprouting. The sequence is that of Apolipoprotein E (APOE) from Plecturocebus moloch (Dusky titi monkey).